The primary structure comprises 429 residues: Probable M18 family aminopeptidase 2 (429 aa).

Positions 82, 156, and 401 each coordinate Zn(2+).

Belongs to the peptidase M18 family. It depends on Zn(2+) as a cofactor.

The polypeptide is Probable M18 family aminopeptidase 2 (Ectopseudomonas mendocina (strain ymp) (Pseudomonas mendocina)).